The chain runs to 287 residues: Eukaryotic translation initiation factor 3 subunit G (287 aa).

Disordered regions lie at residues 1–34 (MSKL…KDGT) and 159–184 (TAGG…YVPP). Residues 207–285 (ATLRVTNVSE…LILRVEFAKR (79 aa)) enclose the RRM domain.

The protein belongs to the eIF-3 subunit G family. In terms of assembly, component of the eukaryotic translation initiation factor 3 (eIF-3) complex.

The protein resides in the cytoplasm. In terms of biological role, RNA-binding component of the eukaryotic translation initiation factor 3 (eIF-3) complex, which is involved in protein synthesis of a specialized repertoire of mRNAs and, together with other initiation factors, stimulates binding of mRNA and methionyl-tRNAi to the 40S ribosome. The eIF-3 complex specifically targets and initiates translation of a subset of mRNAs involved in cell proliferation. This subunit can bind 18S rRNA. This is Eukaryotic translation initiation factor 3 subunit G (tif35) from Aspergillus oryzae (strain ATCC 42149 / RIB 40) (Yellow koji mold).